Consider the following 276-residue polypeptide: Octanoyltransferase LipM (276 aa).

A BPL/LPL catalytic domain is found at 33–247 (GELKPTLRFY…GFKDAFSLTF (215 aa)). The Acyl-thioester intermediate role is filled by cysteine 150.

The protein belongs to the octanoyltransferase LipM family. In terms of assembly, monomer.

It carries out the reaction octanoyl-[ACP] + L-lysyl-[protein] = N(6)-octanoyl-L-lysyl-[protein] + holo-[ACP] + H(+). It functions in the pathway protein modification; protein lipoylation via endogenous pathway; protein N(6)-(lipoyl)lysine from octanoyl-[acyl-carrier-protein]. In terms of biological role, catalyzes the transfer of endogenously produced octanoic acid from octanoyl-acyl-carrier-protein onto the lipoyl domain of GcvH, an intermediate carrier during protein lipoylation. The chain is Octanoyltransferase LipM from Exiguobacterium sp. (strain ATCC BAA-1283 / AT1b).